The following is a 156-amino-acid chain: uncharacterized protein (156 aa).

Histidine 55 is a catalytic residue.

It belongs to the thioester dehydratase family. FabZ subfamily.

This is an uncharacterized protein from Halalkalibacterium halodurans (strain ATCC BAA-125 / DSM 18197 / FERM 7344 / JCM 9153 / C-125) (Bacillus halodurans).